A 361-amino-acid chain; its full sequence is Phosphoserine aminotransferase (361 aa).

The L-glutamate site is built by serine 9 and arginine 42. Pyridoxal 5'-phosphate-binding positions include 76 to 77 (GR), tryptophan 102, threonine 153, aspartate 173, and glutamine 196. Position 197 is an N6-(pyridoxal phosphate)lysine (lysine 197). 238–239 (NT) contributes to the pyridoxal 5'-phosphate binding site.

The protein belongs to the class-V pyridoxal-phosphate-dependent aminotransferase family. SerC subfamily. In terms of assembly, homodimer. The cofactor is pyridoxal 5'-phosphate.

The protein localises to the cytoplasm. It catalyses the reaction O-phospho-L-serine + 2-oxoglutarate = 3-phosphooxypyruvate + L-glutamate. The catalysed reaction is 4-(phosphooxy)-L-threonine + 2-oxoglutarate = (R)-3-hydroxy-2-oxo-4-phosphooxybutanoate + L-glutamate. It participates in amino-acid biosynthesis; L-serine biosynthesis; L-serine from 3-phospho-D-glycerate: step 2/3. It functions in the pathway cofactor biosynthesis; pyridoxine 5'-phosphate biosynthesis; pyridoxine 5'-phosphate from D-erythrose 4-phosphate: step 3/5. Catalyzes the reversible conversion of 3-phosphohydroxypyruvate to phosphoserine and of 3-hydroxy-2-oxo-4-phosphonooxybutanoate to phosphohydroxythreonine. The protein is Phosphoserine aminotransferase of Cronobacter sakazakii (strain ATCC BAA-894) (Enterobacter sakazakii).